Reading from the N-terminus, the 243-residue chain is tRNA (guanine-N(1)-)-methyltransferase (243 aa).

S-adenosyl-L-methionine is bound by residues Gly110 and 130–135; that span reads VGDYVM.

This sequence belongs to the RNA methyltransferase TrmD family. Homodimer.

The protein resides in the cytoplasm. It carries out the reaction guanosine(37) in tRNA + S-adenosyl-L-methionine = N(1)-methylguanosine(37) in tRNA + S-adenosyl-L-homocysteine + H(+). In terms of biological role, specifically methylates guanosine-37 in various tRNAs. The chain is tRNA (guanine-N(1)-)-methyltransferase from Treponema denticola (strain ATCC 35405 / DSM 14222 / CIP 103919 / JCM 8153 / KCTC 15104).